The chain runs to 148 residues: Macrodomain Ter protein (148 aa).

It belongs to the MatP family. In terms of assembly, homodimer.

It is found in the cytoplasm. Required for spatial organization of the terminus region of the chromosome (Ter macrodomain) during the cell cycle. Prevents early segregation of duplicated Ter macrodomains during cell division. Binds specifically to matS, which is a 13 bp signature motif repeated within the Ter macrodomain. In Haemophilus ducreyi (strain 35000HP / ATCC 700724), this protein is Macrodomain Ter protein.